The sequence spans 751 residues: Photosystem I P700 chlorophyll a apoprotein A1 (751 aa).

A run of 8 helical transmembrane segments spans residues 73-96, 159-182, 198-222, 294-312, 349-372, 388-414, 436-458, and 533-551; these read VFSA…FHGA, LYST…WHYH, MNHH…HIAL, MAHH…GHQY, WHAQ…HHMY, LSLF…IFMV, AIIS…LYIH, and FMVH…LILL. The [4Fe-4S] cluster site is built by Cys575 and Cys584. The next 2 helical transmembrane spans lie at 591–612 and 665–687; these read HVFL…HFSW and LSAY…MFLF. His676 is a binding site for chlorophyll a'. The chlorophyll a site is built by Met684 and Tyr692. Trp693 contacts phylloquinone. Residues 725–745 traverse the membrane as a helical segment; that stretch reads AVGVAHYLLGGIATTWSFFLA.

The protein belongs to the PsaA/PsaB family. As to quaternary structure, the PsaA/B heterodimer binds the P700 chlorophyll special pair and subsequent electron acceptors. PSI consists of a core antenna complex that captures photons, and an electron transfer chain that converts photonic excitation into a charge separation. The eukaryotic PSI reaction center is composed of at least 11 subunits. The cofactor is P700 is a chlorophyll a/chlorophyll a' dimer, A0 is one or more chlorophyll a, A1 is one or both phylloquinones and FX is a shared 4Fe-4S iron-sulfur center..

The protein localises to the plastid. It is found in the chloroplast thylakoid membrane. The catalysed reaction is reduced [plastocyanin] + hnu + oxidized [2Fe-2S]-[ferredoxin] = oxidized [plastocyanin] + reduced [2Fe-2S]-[ferredoxin]. PsaA and PsaB bind P700, the primary electron donor of photosystem I (PSI), as well as the electron acceptors A0, A1 and FX. PSI is a plastocyanin/cytochrome c6-ferredoxin oxidoreductase, converting photonic excitation into a charge separation, which transfers an electron from the donor P700 chlorophyll pair to the spectroscopically characterized acceptors A0, A1, FX, FA and FB in turn. Oxidized P700 is reduced on the lumenal side of the thylakoid membrane by plastocyanin or cytochrome c6. The chain is Photosystem I P700 chlorophyll a apoprotein A1 from Ostreococcus tauri.